The following is a 407-amino-acid chain: Wilms tumor protein homolog B (407 aa).

Glycyl lysine isopeptide (Lys-Gly) (interchain with G-Cter in SUMO) cross-links involve residues K55 and K158. The short motif at 213–221 (MTWNQMNLG) is the 9aaTAD element. 4 consecutive C2H2-type zinc fingers follow at residues 284-308 (FMCA…SRKH), 314-338 (YQCD…QRRH), 344-366 (FQCK…TRTH), and 372-396 (FSCR…HNMH). Important for interaction with target DNA regions lie at residues 328 to 342 (SDQL…TGVK) and 354 to 362 (SRSDHLKTH).

It belongs to the EGR C2H2-type zinc-finger protein family. Expressed in the pronephric anlage from stage 23 to 30. Also expressed in the adult kidney (mesonephros) and in testis.

It is found in the nucleus. It localises to the cytoplasm. Its subcellular location is the nucleus speckle. Transcription factor required for development of the vascular component of the pronephric kidney, the glomus; may repress tubule-specific gene expression in the portion of the pronephros fated to form the glomus. Recognizes and binds to the DNA sequence 5'-GCG(T/G)GGGCG-3'. Inhibits Wnt-signaling during embryonic development. The sequence is that of Wilms tumor protein homolog B (wt1-b) from Xenopus laevis (African clawed frog).